The primary structure comprises 181 residues: Adenylyl-sulfate kinase (181 aa).

12 to 19 (GLSGAGKT) contacts ATP. Ser86 (phosphoserine intermediate) is an active-site residue.

It belongs to the APS kinase family.

The enzyme catalyses adenosine 5'-phosphosulfate + ATP = 3'-phosphoadenylyl sulfate + ADP + H(+). The protein operates within sulfur metabolism; hydrogen sulfide biosynthesis; sulfite from sulfate: step 2/3. Its function is as follows. Catalyzes the synthesis of activated sulfate. This is Adenylyl-sulfate kinase from Rippkaea orientalis (strain PCC 8801 / RF-1) (Cyanothece sp. (strain PCC 8801)).